Consider the following 452-residue polypeptide: UDP-N-acetylmuramate--L-alanine ligase (452 aa).

119 to 125 contributes to the ATP binding site; that stretch reads GAHGKTS.

This sequence belongs to the MurCDEF family.

It localises to the cytoplasm. The catalysed reaction is UDP-N-acetyl-alpha-D-muramate + L-alanine + ATP = UDP-N-acetyl-alpha-D-muramoyl-L-alanine + ADP + phosphate + H(+). It participates in cell wall biogenesis; peptidoglycan biosynthesis. Cell wall formation. The sequence is that of UDP-N-acetylmuramate--L-alanine ligase from Streptococcus mutans serotype c (strain ATCC 700610 / UA159).